The following is a 251-amino-acid chain: Lactose phosphotransferase system repressor (251 aa).

An HTH deoR-type domain is found at lysine 3 to serine 58. Positions isoleucine 20–aspartate 39 form a DNA-binding region, H-T-H motif.

Its function is as follows. Repressor of the lactose catabolism operon. Galactose-6-phosphate is the inducer. This chain is Lactose phosphotransferase system repressor (lacR), found in Streptococcus mutans serotype c (strain ATCC 700610 / UA159).